Reading from the N-terminus, the 164-residue chain is Phosphopantetheine adenylyltransferase (164 aa).

Position 9 (Ser9) interacts with substrate. Residues 9–10 (SF) and His17 each bind ATP. Residues Lys41, Leu73, and Lys87 each contribute to the substrate site. ATP-binding positions include 88–90 (GLR), Glu98, and 123–129 (NSFLSSS).

The protein belongs to the bacterial CoaD family. Homohexamer. Requires Mg(2+) as cofactor.

It localises to the cytoplasm. The enzyme catalyses (R)-4'-phosphopantetheine + ATP + H(+) = 3'-dephospho-CoA + diphosphate. The protein operates within cofactor biosynthesis; coenzyme A biosynthesis; CoA from (R)-pantothenate: step 4/5. Reversibly transfers an adenylyl group from ATP to 4'-phosphopantetheine, yielding dephospho-CoA (dPCoA) and pyrophosphate. This chain is Phosphopantetheine adenylyltransferase, found in Clostridium kluyveri (strain ATCC 8527 / DSM 555 / NBRC 12016 / NCIMB 10680 / K1).